The primary structure comprises 578 residues: 2-succinyl-5-enolpyruvyl-6-hydroxy-3-cyclohexene-1-carboxylate synthase (578 aa).

The protein belongs to the TPP enzyme family. MenD subfamily. As to quaternary structure, homodimer. It depends on Mg(2+) as a cofactor. Requires Mn(2+) as cofactor. Thiamine diphosphate is required as a cofactor.

The catalysed reaction is isochorismate + 2-oxoglutarate + H(+) = 5-enolpyruvoyl-6-hydroxy-2-succinyl-cyclohex-3-ene-1-carboxylate + CO2. It participates in quinol/quinone metabolism; 1,4-dihydroxy-2-naphthoate biosynthesis; 1,4-dihydroxy-2-naphthoate from chorismate: step 2/7. Its pathway is quinol/quinone metabolism; menaquinone biosynthesis. In terms of biological role, catalyzes the thiamine diphosphate-dependent decarboxylation of 2-oxoglutarate and the subsequent addition of the resulting succinic semialdehyde-thiamine pyrophosphate anion to isochorismate to yield 2-succinyl-5-enolpyruvyl-6-hydroxy-3-cyclohexene-1-carboxylate (SEPHCHC). The polypeptide is 2-succinyl-5-enolpyruvyl-6-hydroxy-3-cyclohexene-1-carboxylate synthase (Bacillus velezensis (strain DSM 23117 / BGSC 10A6 / LMG 26770 / FZB42) (Bacillus amyloliquefaciens subsp. plantarum)).